A 201-amino-acid polypeptide reads, in one-letter code: MSRYRGPRFKKIRRLGALPGLTNKKPRAGNDLRNQLRSGKKSQYRIRLEEKQKLRFHYGLTERQLLKYVRIAGKAKGSTGQVLLQLLEMRLDNILFRLGMASTIPAARQLVNHRHILVNGRIVDIPSYRCKPRDIITGKDEQKSRALIQKSLDSSPQEELPSHLTLHPFQYKGLVNQIIDSKWVGLKINELLVVEYYSRQT.

The 61-residue stretch at 89–149 (MRLDNILFRL…DEQKSRALIQ (61 aa)) folds into the S4 RNA-binding domain.

Belongs to the universal ribosomal protein uS4 family. In terms of assembly, part of the 30S ribosomal subunit. Contacts protein S5. The interaction surface between S4 and S5 is involved in control of translational fidelity.

Its subcellular location is the plastid. The protein resides in the chloroplast. In terms of biological role, one of the primary rRNA binding proteins, it binds directly to 16S rRNA where it nucleates assembly of the body of the 30S subunit. Functionally, with S5 and S12 plays an important role in translational accuracy. In Coffea arabica (Arabian coffee), this protein is Small ribosomal subunit protein uS4c (rps4).